A 276-amino-acid polypeptide reads, in one-letter code: Anthranilate synthase beta subunit 1, chloroplastic (276 aa).

A chloroplast-targeting transit peptide spans 1–50 (MAASTLYKSCLLQPKSGSTTRRLNPSLVNPLTNPTRVSVLGKSRRDVFAK). Positions 74–273 (PIIVIDNYDS…IKIVEKKESE (200 aa)) constitute a Glutamine amidotransferase type-1 domain. Cys-152 serves as the catalytic Nucleophile. Active-site residues include His-247 and Glu-249.

Heterotetramer consisting of two non-identical subunits: a beta subunit and a large alpha subunit. In terms of tissue distribution, expressed in the central cylinder of mature primary root zones, including pericycle and early lateral root primordia, and vasculature of cotyledons.

The protein resides in the plastid. Its subcellular location is the chloroplast. It catalyses the reaction chorismate + L-glutamine = anthranilate + pyruvate + L-glutamate + H(+). It functions in the pathway amino-acid biosynthesis; L-tryptophan biosynthesis; L-tryptophan from chorismate: step 1/5. Part of a heterotetrameric complex that catalyzes the two-step biosynthesis of anthranilate, an intermediate in the biosynthesis of L-tryptophan. In the first step, the glutamine-binding beta subunit of anthranilate synthase (AS) provides the glutamine amidotransferase activity which generates ammonia as a substrate that, along with chorismate, is used in the second step, catalyzed by the large alpha subunit of AS to produce anthranilate. Plays an important regulatory role in auxin production via the tryptophan-dependent biosynthetic pathway. The chain is Anthranilate synthase beta subunit 1, chloroplastic (ASB1) from Arabidopsis thaliana (Mouse-ear cress).